The chain runs to 760 residues: Catecholate siderophore receptor Fiu (760 aa).

An N-terminal signal peptide occupies residues 1–31 (MENNRNFPARQFHSLTFFAGLCIGITPVAQA). Residues 67-175 (PVADTTRTMT…PTGSINMISK (109 aa)) form the TBDR plug domain. One can recognise a TBDR beta-barrel domain in the interval 180–760 (DSGIDASASI…TFLLTANMHF (581 aa)). A TonB C-terminal box motif is present at residues 743–760 (RYHPGEPRTFLLTANMHF).

It belongs to the TonB-dependent receptor family.

It is found in the cell outer membrane. In terms of biological role, involved in the active transport across the outer membrane of iron complexed with catecholate siderophores such as dihydroxybenzoylserine and dihydroxybenzoate. It derives its energy for transport by interacting with the trans-periplasmic membrane protein TonB. Can also transport catechol-substituted cephalosporins. Receptor for microcins M, H47 and E492. The chain is Catecholate siderophore receptor Fiu (fiu) from Escherichia coli O157:H7.